Consider the following 205-residue polypeptide: Glycerol-3-phosphate acyltransferase (205 aa).

Helical transmembrane passes span 5–25 (LALG…GYLA), 54–74 (GPAA…VWLA), 87–107 (IVLG…WLAF), 117–137 (VGLL…VWGV), 138–158 (CFAV…ATPL), and 162–182 (LWRA…YIVW).

It belongs to the PlsY family. Probably interacts with PlsX.

It is found in the cell inner membrane. It catalyses the reaction an acyl phosphate + sn-glycerol 3-phosphate = a 1-acyl-sn-glycero-3-phosphate + phosphate. It participates in lipid metabolism; phospholipid metabolism. Catalyzes the transfer of an acyl group from acyl-phosphate (acyl-PO(4)) to glycerol-3-phosphate (G3P) to form lysophosphatidic acid (LPA). This enzyme utilizes acyl-phosphate as fatty acyl donor, but not acyl-CoA or acyl-ACP. This chain is Glycerol-3-phosphate acyltransferase, found in Gloeobacter violaceus (strain ATCC 29082 / PCC 7421).